The following is a 218-amino-acid chain: Imidazole glycerol phosphate synthase subunit HisH (218 aa).

Residues 12-218 form the Glutamine amidotransferase type-1 domain; sequence SIVVVDYGLG…RNFVDYCADQ (207 aa). Catalysis depends on Cys88, which acts as the Nucleophile. Residues His196 and Glu198 contribute to the active site.

In terms of assembly, heterodimer of HisH and HisF.

The protein localises to the cytoplasm. The enzyme catalyses 5-[(5-phospho-1-deoxy-D-ribulos-1-ylimino)methylamino]-1-(5-phospho-beta-D-ribosyl)imidazole-4-carboxamide + L-glutamine = D-erythro-1-(imidazol-4-yl)glycerol 3-phosphate + 5-amino-1-(5-phospho-beta-D-ribosyl)imidazole-4-carboxamide + L-glutamate + H(+). The catalysed reaction is L-glutamine + H2O = L-glutamate + NH4(+). Its pathway is amino-acid biosynthesis; L-histidine biosynthesis; L-histidine from 5-phospho-alpha-D-ribose 1-diphosphate: step 5/9. Functionally, IGPS catalyzes the conversion of PRFAR and glutamine to IGP, AICAR and glutamate. The HisH subunit catalyzes the hydrolysis of glutamine to glutamate and ammonia as part of the synthesis of IGP and AICAR. The resulting ammonia molecule is channeled to the active site of HisF. The protein is Imidazole glycerol phosphate synthase subunit HisH of Halobacterium salinarum (strain ATCC 700922 / JCM 11081 / NRC-1) (Halobacterium halobium).